Here is a 475-residue protein sequence, read N- to C-terminus: F-box protein SKIP22 (475 aa).

The interval 114-133 is disordered; that stretch reads DQAKSNPNTSVEDPEGDISG. Residues 319–365 form the F-box domain; it reads PPCLMRLPTELKLKILELLPGVSIGNMACVCTEMRYLASDNDLWKQK.

Part of a SCF (ASK-cullin-F-box) protein ligase complex. Interacts with SKP1A/ASK1 and SPK1B/ASK2.

Its subcellular location is the nucleus. It functions in the pathway protein modification; protein ubiquitination. Functionally, component of SCF(ASK-cullin-F-box) E3 ubiquitin ligase complexes, which may mediate the ubiquitination and subsequent proteasomal degradation of target proteins. This Arabidopsis thaliana (Mouse-ear cress) protein is F-box protein SKIP22 (SKIP22).